We begin with the raw amino-acid sequence, 24 residues long: FLPAIAGMAAKFLPKIFCAISKKC.

An intrachain disulfide couples cysteine 18 to cysteine 24.

Expressed by the skin glands.

Its subcellular location is the secreted. Functionally, antibacterial activity against Gram-positive bacterium S.aureus and Gram-negative bacterium E.coli. Has activity against C.albicans. This Lithobates berlandieri (Rio Grande leopard frog) protein is Brevinin-1Bb.